A 249-amino-acid polypeptide reads, in one-letter code: Uridylate kinase (249 aa).

Residue 13–16 (KLSG) coordinates ATP. Glycine 55 lines the UMP pocket. 2 residues coordinate ATP: glycine 56 and arginine 60. Residues aspartate 75 and 136–143 (IGNPFFTT) contribute to the UMP site. Threonine 163, phenylalanine 169, and aspartate 172 together coordinate ATP.

The protein belongs to the UMP kinase family. In terms of assembly, homohexamer.

The protein resides in the cytoplasm. It catalyses the reaction UMP + ATP = UDP + ADP. Its pathway is pyrimidine metabolism; CTP biosynthesis via de novo pathway; UDP from UMP (UMPK route): step 1/1. Inhibited by UTP. Functionally, catalyzes the reversible phosphorylation of UMP to UDP. The chain is Uridylate kinase from Baumannia cicadellinicola subsp. Homalodisca coagulata.